A 71-amino-acid chain; its full sequence is Small, acid-soluble spore protein 2 (71 aa).

It belongs to the alpha/beta-type SASP family.

Its function is as follows. SASP are bound to spore DNA. They are double-stranded DNA-binding proteins that cause DNA to change to an a-like conformation. They protect the DNA backbone from chemical and enzymatic cleavage and are thus involved in dormant spore's high resistance to UV light. In Bacillus subtilis, this protein is Small, acid-soluble spore protein 2.